We begin with the raw amino-acid sequence, 158 residues long: Mitotic-spindle organizing protein 2 (158 aa).

S34 is subject to Phosphoserine. Residues 81–158 (AGQRVASDSQ…PGRSPPRSGT (78 aa)) form a disordered region. Over residues 110–119 (KGGGALGGGP) the composition is skewed to gly residues. At S152 the chain carries Phosphoserine.

It belongs to the MOZART2 family. As to quaternary structure, associates with the gamma-tubulin ring complex (gTuRC) consisting of TUBGCP2, TUBGCP3, TUBGCP4, TUBGCP5 and TUBGCP6 and gamma-tubulin TUBG1 or TUBG2; within the complex, interacts with TUBGCP2; the interaction plays a role in gTuRC activation.

Its subcellular location is the cytoplasm. The protein resides in the cytoskeleton. It localises to the microtubule organizing center. It is found in the centrosome. The protein localises to the spindle. Functionally, required for the recruitment and the assembly of the gamma-tubulin ring complex (gTuRC) at the centrosome. The gTuRC regulates the minus-end nucleation of alpha-beta tubulin heterodimers that grow into microtubule protafilaments, a critical step in centrosome duplication and spindle formation. In Bos taurus (Bovine), this protein is Mitotic-spindle organizing protein 2 (MZT2).